The primary structure comprises 568 residues: Natural resistance-associated macrophage protein 2 (568 aa).

Residues 1-20 are compositionally biased toward basic and acidic residues; sequence MVLDPEEKIPDDGASGDHGD. Residues 1–45 form a disordered region; sequence MVLDPEEKIPDDGASGDHGDSASLGAINPAYSNSSLPHSTGDSEE. Residues 1–69 lie on the Cytoplasmic side of the membrane; that stretch reads MVLDPEEKIP…EEYSCFSFRK (69 aa). A compositionally biased stretch (polar residues) spans 30–40; the sequence is AYSNSSLPHST. A helical transmembrane segment spans residues 70–90; the sequence is LWAFTGPGFLMSIAYLDPGNI. Topologically, residues 91–95 are extracellular; that stretch reads ESDLQ. Residues 96 to 117 traverse the membrane as a helical segment; sequence SGAVAGFKLLWVLLLATIVGLL. Topologically, residues 118 to 154 are cytoplasmic; it reads LQRLAARLGVVTGLHLAEVCHRQYPKVPRIILWLMVE. Residues 155–175 traverse the membrane as a helical segment; sequence LAIIGSDMQEVIGSAIAINLL. Topologically, residues 176–179 are extracellular; sequence SAGR. Residues 180 to 194 traverse the membrane as a helical segment; it reads VPLYGGVLITIADTF. At 195 to 208 the chain is on the cytoplasmic side; the sequence is VFLFLDKYGLRKLE. The helical transmembrane segment at 209-229 threads the bilayer; sequence AFFGFLITIMALTFGYEYVTV. The Extracellular portion of the chain corresponds to 230–255; that stretch reads KPSQSQVLRGMFVPSCSGCHTPQVEQ. The helical transmembrane segment at 256–276 threads the bilayer; it reads AVGIVGAVIMPHNMYLHSALV. Topologically, residues 277–301 are cytoplasmic; that stretch reads KSRQVNRANKQEVREANKYFFIESC. A helical transmembrane segment spans residues 302–322; that stretch reads IALFVSFIINVFVVSVFAEAF. Residues 323–360 are Extracellular-facing; the sequence is FEKTNEQVVEVCRNSSSPHADLFPNDNSTLAVDIYKGG. N336 and N349 each carry an N-linked (GlcNAc...) asparagine glycan. The chain crosses the membrane as a helical span at residues 361 to 381; it reads VVLGCYFGPAALYIWAVGILA. Residues 382–408 are Cytoplasmic-facing; that stretch reads AGQSSTMTGTYSGQFVMEGFLNLKWSR. Residues 409-429 traverse the membrane as a helical segment; sequence FARVILTRSIAIIPTLLVAVF. Residues 430-440 lie on the Extracellular side of the membrane; sequence QDVEHLTGMND. The helical transmembrane segment at 441–461 threads the bilayer; it reads FLNVLQSLQLPFALIPILTFT. Residues 462-482 lie on the Cytoplasmic side of the membrane; the sequence is SLRPVMSEFSNGIGWRIAGGI. Residues 483–503 traverse the membrane as a helical segment; the sequence is LVLLVCSINMYFVVVYVQELG. The Extracellular portion of the chain corresponds to 504-506; the sequence is HVA. Residues 507-527 form a helical membrane-spanning segment; sequence LYVVAAVVSVAYLGFVFYLGW. Topologically, residues 528–568 are cytoplasmic; the sequence is QCLIALGLSFLDCGRSYHLGLTARPEIYLLNTVDAVSLVSR. The interval 555–559 is required for early endosome targeting; that stretch reads YLLNT. Phosphoserine occurs at positions 556, 564, and 567.

This sequence belongs to the NRAMP family. In terms of assembly, forms a complex with NDFIP1 and NEDD4L, in cortical neurons, in response to iron and cobalt exposure; this interaction leads to SLC11A2 ubiquitination by NEDD4L and proteasome-dependent degradation. Interacts with NDFIP1, NDFIP2 and WWP2; this interaction leads to SLC11A2 ubiquitination by WWP2 and subsequent proteasome-dependent degradation. Interacts with COX2 and TOM6 at the outer mitochondrion membrane. Interacts with ARRDC1; this interaction regulates the incorporation of SLC11A2 into extracellular vesicles through an ubiquitination-dependent mechanism. Interacts with ARRDC4; controls the incorporation of SLC11A2 into extracellular vesicles through an ubiquitination-dependent mechanism. Post-translationally, ubiquitinated by WWP2. In terms of processing, N-glycosylated. Ubiquitous. As to expression, expressed in proximal intestine, kidney and brain.

The protein localises to the golgi apparatus. The protein resides in the trans-Golgi network membrane. Its subcellular location is the early endosome membrane. It is found in the recycling endosome membrane. It localises to the late endosome membrane. The protein localises to the lysosome membrane. The protein resides in the apical cell membrane. Its subcellular location is the mitochondrion outer membrane. It is found in the extracellular vesicle membrane. The enzyme catalyses Fe(2+)(in) + H(+)(in) = Fe(2+)(out) + H(+)(out). The catalysed reaction is Cd(2+)(out) + H(+)(out) = Cd(2+)(in) + H(+)(in). It carries out the reaction Co(2+)(out) + H(+)(out) = Co(2+)(in) + H(+)(in). It catalyses the reaction Mn(2+)(in) + H(+)(in) = Mn(2+)(out) + H(+)(out). The enzyme catalyses Zn(2+)(out) + H(+)(out) = Zn(2+)(in) + H(+)(in). The catalysed reaction is Ni(2+)(out) + H(+)(out) = Ni(2+)(in) + H(+)(in). It carries out the reaction H(+)(in) = H(+)(out). It catalyses the reaction Fe(2+)(in) = Fe(2+)(out). Inhibited by 2-(3-carbamimidoylsulfanylmethyl-benzyl)-isothiourea. Its function is as follows. Proton-coupled metal ion symporter operating with a proton to metal ion stoichiometry of 1:1. Selectively transports various divalent metal cations, in decreasing affinity: Cd(2+) &gt; Fe(2+) &gt; Co(2+), Mn(2+) &gt;&gt; Zn(2+), Ni(2+), VO(2+). Essential for maintenance of iron homeostasis by modulating intestinal absorption of dietary Fe(2+) and TF-associated endosomal Fe(2+) transport in erythroid precursors and other cells. Enables Fe(2+) and Mn(2+) ion entry into mitochondria, and is thus expected to promote mitochondrial heme synthesis, iron-sulfur cluster biogenesis and antioxidant defense. Can mediate uncoupled fluxes of either protons or metal ions. The chain is Natural resistance-associated macrophage protein 2 (Slc11a2) from Rattus norvegicus (Rat).